The following is a 738-amino-acid chain: Integrin beta-2-like protein (738 aa).

An N-terminal signal peptide occupies residues 1-22 (MLGQCTLLPVLAGLLSLESALS). The Extracellular portion of the chain corresponds to 23–671 (QLCTKDNVST…LVCAEISNTT (649 aa)). The PSI domain maps to 24–74 (LCTKDNVSTCQDCIRSGPSCAWCQKLNFTGRGEPDSVRCDTPEQLLLKGCT). Disulfide bonds link cysteine 25–cysteine 419, cysteine 33–cysteine 43, cysteine 36–cysteine 73, cysteine 46–cysteine 62, cysteine 218–cysteine 258, cysteine 358–cysteine 372, cysteine 421–cysteine 439, cysteine 431–cysteine 442, cysteine 444–cysteine 453, cysteine 455–cysteine 486, cysteine 469–cysteine 484, cysteine 478–cysteine 489, cysteine 491–cysteine 506, cysteine 508–cysteine 531, cysteine 513–cysteine 529, cysteine 521–cysteine 534, cysteine 536–cysteine 545, cysteine 547–cysteine 570, cysteine 554–cysteine 568, cysteine 562–cysteine 573, cysteine 575–cysteine 584, cysteine 594–cysteine 603, and cysteine 600–cysteine 664. Residue asparagine 29 is glycosylated (N-linked (GlcNAc...) asparagine). Residues asparagine 50, asparagine 102, asparagine 173, asparagine 226, asparagine 252, asparagine 342, asparagine 360, and asparagine 386 are each glycosylated (N-linked (GlcNAc...) asparagine). The VWFA domain occupies 126–329 (SVDLYFLMGL…DSSNVAQLIR (204 aa)). I-EGF domains lie at 421–454 (CQEQSQHHSLCGGKGAMECGICRCNSGYAGKNCE), 455–507 (CQTQ…QYCE), 508–546 (CNNVNCERYDGQVCGGPERGHCSCGRCFCRYGFVGSACQ), and 547–585 (CRMSTSGCLNNRMVECSGHGRCYCNRCLCDPGYQPPLCE). Asparagine 473 carries an N-linked (GlcNAc...) asparagine glycan. N-linked (GlcNAc...) asparagine glycosylation is found at asparagine 627 and asparagine 669. Residues 672-692 (ILLGVIVGVLLAVIFLLVYCM) form a helical membrane-spanning segment. The Cytoplasmic segment spans residues 693–738 (VYLKGTQKAAKLPRKGGAQSTLAQQPHFQEPHHVEPVWNQERQGTQ). Residues 709–738 (GAQSTLAQQPHFQEPHHVEPVWNQERQGTQ) form a disordered region. The span at 710–719 (AQSTLAQQPH) shows a compositional bias: polar residues.

It belongs to the integrin beta chain family. As to quaternary structure, monomer and homodimer. Unlike integrin beta chains, no alpha chain partner has yet been found. In terms of processing, N-glycosylated. In terms of tissue distribution, expressed predominantly in maturing and mature neutrophils.

It localises to the cell membrane. In terms of biological role, during inflammatory stimulation, plays a role in retaining Cxcl13-expressing cells at the site of the inflammatory response. This is Integrin beta-2-like protein from Mus musculus (Mouse).